The following is a 267-amino-acid chain: Large ribosomal subunit protein bL9m (267 aa).

The N-terminal 52 residues, 1 to 52, are a transit peptide targeting the mitochondrion; the sequence is MAAPVVTAPGRALLRAGAGRLLRGGVQELLRPRHEGNAPDLACNFSLSQNRG.

Belongs to the bacterial ribosomal protein bL9 family. Component of the mitochondrial large ribosomal subunit (mt-LSU). Mature mammalian 55S mitochondrial ribosomes consist of a small (28S) and a large (39S) subunit. The 28S small subunit contains a 12S ribosomal RNA (12S mt-rRNA) and 30 different proteins. The 39S large subunit contains a 16S rRNA (16S mt-rRNA), a copy of mitochondrial valine transfer RNA (mt-tRNA(Val)), which plays an integral structural role, and 52 different proteins.

Its subcellular location is the mitochondrion. The polypeptide is Large ribosomal subunit protein bL9m (MRPL9) (Homo sapiens (Human)).